The following is a 293-amino-acid chain: MSYNGIGLPTPRGSGTNGYVMRNLSHVKKYDKNTNLQSNRNAKALEKRVQDPSISEHECRRQIESKLLLYREQLLEEVSSQHSTDAAASDSNTNFGTENPKPPKAIIKDEQSQSKTKSLDEADVEILVQKYREQLLKELQLQKSTEKGKNFESILQPQKRKETRGFHSKNDDDGRLEERDDLRSSVDDDYYDYPRYSERKSLNSKRHVDNYNENRRRHYDSYSSYDELERRRSSNESYSRRSELPRRDYNRHDERERYSYHRRRERSNSPSYTKNESIPVVDRDSSPEGGEIV.

3 disordered regions span residues 30–52 (YDKN…VQDP), 80–119 (SQHS…TKSL), and 146–293 (EKGK…GEIV). A compositionally biased stretch (basic and acidic residues) spans 43–52 (KALEKRVQDP). A CWF21 domain is found at 55–98 (SEHECRRQIESKLLLYREQLLEEVSSQHSTDAAASDSNTNFGTE). A compositionally biased stretch (polar residues) spans 80–97 (SQHSTDAAASDSNTNFGT). 4 stretches are compositionally biased toward basic and acidic residues: residues 106–119 (IIKD…TKSL), 159–186 (KRKE…RSSV), 195–214 (RYSE…YNEN), and 227–259 (ELER…ERYS). Ser-118 is subject to Phosphoserine. A phosphoserine mark is found at Ser-285 and Ser-286.

Belongs to the CWC21 family. As to quaternary structure, belongs to the 40S cdc5-associated complex (or cwf complex), a spliceosome sub-complex reminiscent of a late-stage spliceosome composed of the U2, U5 and U6 snRNAs and at least brr2, cdc5, cwf2/prp3, cwf3/syf1, cwf4/syf3, cwf5/ecm2, spp42/cwf6, cwf7/spf27, cwf8, cwf9, cwf10, cwf11, cwf12, prp45/cwf13, cwf14, cwf15, cwf16, cwf17, cwf18, cwf19, cwf20, cwf21, cwf22, cwf23, cwf24, cwf25, cwf26, cyp7/cwf27, cwf28, cwf29/ist3, lea1, msl1, prp5/cwf1, prp10, prp12/sap130, prp17, prp22, sap61, sap62, sap114, sap145, slu7, smb1, smd1, smd3, smf1, smg1 and syf2.

It localises to the cytoplasm. The protein localises to the nucleus. Involved in pre-mRNA splicing. May function at or prior to the first catalytic step of splicing at the catalytic center of the spliceosome. May do so by stabilizing the catalytic center or the position of the RNA substrate. The protein is Pre-mRNA-splicing factor cwf21 (cwf21) of Schizosaccharomyces pombe (strain 972 / ATCC 24843) (Fission yeast).